A 227-amino-acid polypeptide reads, in one-letter code: Ribose-5-phosphate isomerase A (227 aa).

Residues 30–33 (TGST), 86–89 (DGAD), and 99–104 (KGMGGA) each bind substrate. The Proton acceptor role is filled by glutamate 108. Residue lysine 126 coordinates substrate.

The protein belongs to the ribose 5-phosphate isomerase family. As to quaternary structure, homodimer.

The catalysed reaction is aldehydo-D-ribose 5-phosphate = D-ribulose 5-phosphate. It functions in the pathway carbohydrate degradation; pentose phosphate pathway; D-ribose 5-phosphate from D-ribulose 5-phosphate (non-oxidative stage): step 1/1. Its function is as follows. Involved in the first step of the non-oxidative branch of the pentose phosphate pathway. It catalyzes the reversible conversion of ribose-5-phosphate to ribulose 5-phosphate. Can also act on D-ribose-5-diphosphate and D-ribose-5-triphosphate as substrate. The polypeptide is Ribose-5-phosphate isomerase A (Thermus thermophilus (strain ATCC BAA-163 / DSM 7039 / HB27)).